The chain runs to 323 residues: Methenyltetrahydromethanopterin cyclohydrolase (323 aa).

This sequence belongs to the MCH family.

It localises to the cytoplasm. It catalyses the reaction 5,10-methenyl-5,6,7,8-tetrahydromethanopterin + H2O = N(5)-formyl-5,6,7,8-tetrahydromethanopterin + H(+). Its pathway is one-carbon metabolism; methanogenesis from CO(2); 5,10-methenyl-5,6,7,8-tetrahydromethanopterin from CO(2): step 3/3. Functionally, catalyzes the reversible interconversion of 5-formyl-H(4)MPT to methenyl-H(4)MPT(+). The protein is Methenyltetrahydromethanopterin cyclohydrolase of Methanococcus maripaludis (strain C7 / ATCC BAA-1331).